The following is a 215-amino-acid chain: MELTPHEARVIGVLLEKEITTPEQYPLSLNSLTSGCNQKTSREPVLSLSESEVQNTLDDLTKKRLISEQSGFGSRVVKYKHRFCNTEFSDLQLKSSELAVVCLLLLRGPQTPGELRTRSNRLHEFHDVSEVEATLNELQRRESPLVMLLAKEPGKREARYRQLFTEVDDTEIQSTPAQSTEYSITQHASGLEARVNTLEQQVAELTEQIKHLLDR.

This sequence belongs to the UPF0502 family.

This Shewanella halifaxensis (strain HAW-EB4) protein is UPF0502 protein Shal_1801.